The sequence spans 250 residues: Copper homeostasis protein cutC homolog (250 aa).

It belongs to the CutC family.

Involved in copper homeostasis. Affects body morphology and length, egg laying and brood size. The protein is Copper homeostasis protein cutC homolog (cutc-1) of Caenorhabditis elegans.